We begin with the raw amino-acid sequence, 334 residues long: Malate dehydrogenase, cytoplasmic (334 aa).

11–17 contacts NAD(+); sequence GAAGQIA. Substrate-binding residues include R92 and R98. NAD(+)-binding positions include N105, Q112, and 129–131; that span reads VGN. Positions 131 and 162 each coordinate substrate. The Proton acceptor role is filled by H187.

It belongs to the LDH/MDH superfamily. MDH type 2 family. Homodimer.

It localises to the cytoplasm. The protein resides in the cytosol. The enzyme catalyses (S)-malate + NAD(+) = oxaloacetate + NADH + H(+). It carries out the reaction (S)-2-hydroxyglutarate + NAD(+) = 2-oxoglutarate + NADH + H(+). Functionally, catalyzes the reduction of aromatic alpha-keto acids in the presence of NADH. Plays essential roles in the malate-aspartate shuttle and the tricarboxylic acid cycle, important in mitochondrial NADH supply for oxidative phosphorylation. Catalyzes the reduction of 2-oxoglutarate to 2-hydroxyglutarate, leading to elevated reactive oxygen species (ROS). This is Malate dehydrogenase, cytoplasmic (mdh1) from Xenopus laevis (African clawed frog).